The following is a 1363-amino-acid chain: Vascular endothelial growth factor receptor 3 (1363 aa).

The first 24 residues, 1-24, serve as a signal peptide directing secretion; it reads MQRGAALCLRLWLCLGLLDGLVSG. The Extracellular segment spans residues 25–775; that stretch reads YSMTPPTLNI…EGSEDKGSME (751 aa). 7 Ig-like C2-type domains span residues 30–127, 151–213, 219–326, 331–415, 422–552, 555–671, and 678–764; these read PTLN…TAAS, KDAM…WGDQ, PFLV…TEVI, PFIS…ISLE, PQIH…FYVT, PDGF…KYLS, and PRLT…ASVA. N-linked (GlcNAc...) asparagine glycosylation is found at Asn33, Asn104, Asn166, Asn251, Asn299, and Asn411. Disulfide bonds link Cys51/Cys111 and Cys158/Cys206. Cys252 and Cys310 are oxidised to a cystine. 3 disulfides stabilise this stretch: Cys445/Cys534, Cys466/Cys486, and Cys578/Cys653. 5 N-linked (GlcNAc...) asparagine glycosylation sites follow: Asn515, Asn527, Asn594, Asn683, and Asn690. An intrachain disulfide couples Cys699 to Cys751. Asn758 is a glycosylation site (N-linked (GlcNAc...) asparagine). The chain crosses the membrane as a helical span at residues 776 to 796; that stretch reads IVILVGTGVIAVFFWVLLLLI. Over 797–1363 the chain is Cytoplasmic; the sequence is FCNMRRPAHA…RVTFFTDNSY (567 aa). Residues Tyr830, Tyr833, and Tyr853 each carry the phosphotyrosine; by SRC modification. Residues 845-1173 enclose the Protein kinase domain; it reads LHLGRVLGYG…ELVEILGDLL (329 aa). Residues 851–859 and Lys879 contribute to the ATP site; that span reads LGYGAFGKV. The Proton acceptor role is filled by Asp1037. Tyr1063 is modified (phosphotyrosine; by autocatalysis and SRC). A phosphotyrosine; by autocatalysis mark is found at Tyr1068, Tyr1230, Tyr1231, and Tyr1265. The segment at 1291–1331 is disordered; sequence HRQESGFSCKGPGQNVAVTRAHPDSQGRRRRPERGARGGQV. Phosphotyrosine; by autocatalysis and SRC occurs at positions 1333 and 1337. Tyr1363 carries the post-translational modification Phosphotyrosine; by autocatalysis.

Belongs to the protein kinase superfamily. Tyr protein kinase family. CSF-1/PDGF receptor subfamily. In terms of assembly, interacts with VEGFC and VEGFD. Monomer in the absence of bound VEGFC or VEGFD. Homodimer in the presence of bound VEGFC or VEGFD. Can also form a heterodimer with KDR. Interacts with PTPN14; the interaction is enhanced by stimulation with VEGFC. Interacts with CRK, GRB2, PTK2/FAK1, SHC1, PIK3R1 and PTPN11/SHP-2. Identified in a complex with SRC and ITGB1. Post-translationally, autophosphorylated on tyrosine residues upon ligand binding. Autophosphorylation occurs in trans, i.e. one subunit of the dimeric receptor phosphorylates tyrosine residues on the other subunit. Phosphorylation in response to H(2)O(2) is mediated by a process that requires SRC and PRKCD activity. Phosphorylation at Tyr-1068 is required for autophosphorylation at additional tyrosine residues. Phosphorylation at Tyr-1063 and Tyr-1337 is important for interaction with CRK and subsequent activation of MAPK8. Phosphorylation at Tyr-1230, Tyr-1231 and Tyr-1337 is important for interaction with GRB2 and subsequent activation of the AKT1 and MAPK1/ERK2 and/or MAPK3/ERK1 signaling pathways. In response to endothelial cell adhesion onto collagen, can also be phosphorylated in the absence of FLT4 kinase activity by SRC at Tyr-830, Tyr-833, Tyr-853, Tyr-1063, Tyr-1333, and Tyr-1337. In terms of tissue distribution, detected in endothelial cells (at protein level). Widely expressed. Detected in fetal spleen, lung and brain. Detected in adult liver, muscle, thymus, placenta, lung, testis, ovary, prostate, heart, and kidney.

The protein resides in the cell membrane. It localises to the cytoplasm. It is found in the nucleus. Its subcellular location is the secreted. It carries out the reaction L-tyrosyl-[protein] + ATP = O-phospho-L-tyrosyl-[protein] + ADP + H(+). With respect to regulation, present in an inactive conformation in the absence of bound ligand. Binding of VEGFC or VEGFD leads to dimerization and activation by autophosphorylation on tyrosine residues. Inhibited by MAZ51. In terms of biological role, tyrosine-protein kinase that acts as a cell-surface receptor for VEGFC and VEGFD, and plays an essential role in adult lymphangiogenesis and in the development of the vascular network and the cardiovascular system during embryonic development. Promotes proliferation, survival and migration of endothelial cells, and regulates angiogenic sprouting. Signaling by activated FLT4 leads to enhanced production of VEGFC, and to a lesser degree VEGFA, thereby creating a positive feedback loop that enhances FLT4 signaling. Modulates KDR signaling by forming heterodimers. The secreted isoform 3 may function as a decoy receptor for VEGFC and/or VEGFD and play an important role as a negative regulator of VEGFC-mediated lymphangiogenesis and angiogenesis. Binding of vascular growth factors to isoform 1 or isoform 2 leads to the activation of several signaling cascades; isoform 2 seems to be less efficient in signal transduction, because it has a truncated C-terminus and therefore lacks several phosphorylation sites. Mediates activation of the MAPK1/ERK2, MAPK3/ERK1 signaling pathway, of MAPK8 and the JUN signaling pathway, and of the AKT1 signaling pathway. Phosphorylates SHC1. Mediates phosphorylation of PIK3R1, the regulatory subunit of phosphatidylinositol 3-kinase. Promotes phosphorylation of MAPK8 at 'Thr-183' and 'Tyr-185', and of AKT1 at 'Ser-473'. The polypeptide is Vascular endothelial growth factor receptor 3 (FLT4) (Homo sapiens (Human)).